A 112-amino-acid chain; its full sequence is Cytochrome c type-1 (112 aa).

4 residues coordinate heme c: Cys20, Cys23, His24, and Met85.

In terms of processing, binds 1 heme c group covalently per subunit.

It is found in the mitochondrion intermembrane space. Electron carrier between complex III (ubiquinol-cytochrome c oxireductase) and complex IV (cytochrome c oxidase). The protein is Cytochrome c type-1 of Ascaris suum (Pig roundworm).